The sequence spans 204 residues: Urease accessory protein UreG (204 aa).

10-17 (GPVGAGKT) lines the GTP pocket.

The protein belongs to the SIMIBI class G3E GTPase family. UreG subfamily. Homodimer. UreD, UreF and UreG form a complex that acts as a GTP-hydrolysis-dependent molecular chaperone, activating the urease apoprotein by helping to assemble the nickel containing metallocenter of UreC. The UreE protein probably delivers the nickel.

It localises to the cytoplasm. In terms of biological role, facilitates the functional incorporation of the urease nickel metallocenter. This process requires GTP hydrolysis, probably effectuated by UreG. The chain is Urease accessory protein UreG from Bacillus sp. (strain TB-90).